A 169-amino-acid chain; its full sequence is Large ribosomal subunit protein bL9 (169 aa).

Belongs to the bacterial ribosomal protein bL9 family.

Its function is as follows. Binds to the 23S rRNA. This is Large ribosomal subunit protein bL9 from Chlamydia pneumoniae (Chlamydophila pneumoniae).